Here is a 252-residue protein sequence, read N- to C-terminus: AA9 family lytic polysaccharide monooxygenase B (252 aa).

Residues 1–20 (MVSFTKTFFAIVACALGVQA) form the signal peptide. 2 residues coordinate Cu(2+): H21 and H106. The cysteines at positions 72 and 198 are disulfide-linked. N-linked (GlcNAc...) asparagine glycosylation occurs at N158. The O2 site is built by H184 and Q193. Y195 is a Cu(2+) binding site. N237 carries N-linked (GlcNAc...) asparagine glycosylation.

Belongs to the polysaccharide monooxygenase AA9 family. Cu(2+) is required as a cofactor.

It localises to the secreted. The catalysed reaction is [(1-&gt;4)-beta-D-glucosyl]n+m + reduced acceptor + O2 = 4-dehydro-beta-D-glucosyl-[(1-&gt;4)-beta-D-glucosyl]n-1 + [(1-&gt;4)-beta-D-glucosyl]m + acceptor + H2O.. In terms of biological role, lytic polysaccharide monooxygenase (LPMO) that depolymerizes crystalline and amorphous polysaccharides via the oxidation of scissile alpha- or beta-(1-4)-glycosidic bonds, yielding C1 or C4 oxidation products. Catalysis by LPMOs requires the reduction of the active-site copper from Cu(II) to Cu(I) by a reducing agent and H(2)O(2) or O(2) as a cosubstrate. The synergistic activity of LPMO9B with xylanase Xyl10G or cellulase Cel5B shows efficient bioconversion rates of 56 and 174 percent in pretreated kenaf (Hibiscus cannabinus) and oak, respectively. The polypeptide is AA9 family lytic polysaccharide monooxygenase B (Gloeophyllum trabeum (strain ATCC 11539 / FP-39264 / Madison 617) (Brown rot fungus)).